We begin with the raw amino-acid sequence, 367 residues long: Anthranilate phosphoribosyltransferase (367 aa).

5-phospho-alpha-D-ribose 1-diphosphate is bound by residues Gly-105, Gly-108 to Asp-109, Thr-113, Asn-115 to Thr-118, Lys-133 to Ser-141, and Gly-145. Gly-105 contacts anthranilate. Position 117 (Ser-117) interacts with Mg(2+). Asn-136 provides a ligand contact to anthranilate. Residue Arg-191 coordinates anthranilate. Residues Asp-249 and Glu-250 each contribute to the Mg(2+) site.

The protein belongs to the anthranilate phosphoribosyltransferase family. In terms of assembly, homodimer. Requires Mg(2+) as cofactor.

The enzyme catalyses N-(5-phospho-beta-D-ribosyl)anthranilate + diphosphate = 5-phospho-alpha-D-ribose 1-diphosphate + anthranilate. It functions in the pathway amino-acid biosynthesis; L-tryptophan biosynthesis; L-tryptophan from chorismate: step 2/5. Its function is as follows. Catalyzes the transfer of the phosphoribosyl group of 5-phosphorylribose-1-pyrophosphate (PRPP) to anthranilate to yield N-(5'-phosphoribosyl)-anthranilate (PRA). This Corynebacterium jeikeium (strain K411) protein is Anthranilate phosphoribosyltransferase.